The sequence spans 267 residues: Undecaprenyl-diphosphatase (267 aa).

7 helical membrane passes run 1-21, 40-60, 85-105, 112-132, 188-208, 219-239, and 245-265; these read MPLL…FLPV, GQAI…LFFW, LALG…FLYF, LRSV…LYIA, IAML…GTEV, DMGI…ALMM, and VSFT…LFIA.

This sequence belongs to the UppP family.

The protein localises to the cell inner membrane. It catalyses the reaction di-trans,octa-cis-undecaprenyl diphosphate + H2O = di-trans,octa-cis-undecaprenyl phosphate + phosphate + H(+). In terms of biological role, catalyzes the dephosphorylation of undecaprenyl diphosphate (UPP). Confers resistance to bacitracin. This is Undecaprenyl-diphosphatase from Ruegeria sp. (strain TM1040) (Silicibacter sp.).